A 222-amino-acid polypeptide reads, in one-letter code: Putative N-acetylmannosamine-6-phosphate 2-epimerase (222 aa).

This sequence belongs to the NanE family.

The catalysed reaction is an N-acyl-D-glucosamine 6-phosphate = an N-acyl-D-mannosamine 6-phosphate. It functions in the pathway amino-sugar metabolism; N-acetylneuraminate degradation; D-fructose 6-phosphate from N-acetylneuraminate: step 3/5. Converts N-acetylmannosamine-6-phosphate (ManNAc-6-P) to N-acetylglucosamine-6-phosphate (GlcNAc-6-P). This chain is Putative N-acetylmannosamine-6-phosphate 2-epimerase, found in Staphylococcus aureus (strain MSSA476).